We begin with the raw amino-acid sequence, 450 residues long: MAKDLLPKQAANEPSLKDCTCKRCLKLGASKEKKIRRKKKGEEKRERHYGNRRKLTFNFLKHTNMENTNYDVITSVGYLNEKYGLKKSHYIEKFIKCIHRKINIDVSKITDAYVNSLNPWVKVKLFLLLVTLSEKGGPEYWLDKTDGEKNSEASSTDNSLENSTKGADSAGSTALRDEMVKSHKNLFPTLTEQIIQHNINQDFTESTYDEDYVFSSIWANFMEGLINHYLEKVIVPYSEMKVCQQLYKPMMKIISLYNEYNELMVKSEKNGFLPSLQDSENVQGDKGEKESKDDAVSQERLERAQKLLWQAREDIPKTISKELTLLSEMYSTLSADEQDYELDEFVCCAEEYIELEYLPALVDVLFANCGTNNFWKIMLVLEPFFYYIEDVGGDDDEDEDNVDNSEGDEESLLSRNVEGDDNVVERHFKPDPRVITLEKICEVAARQKWI.

The segment covering 141–151 (WLDKTDGEKNS) has biased composition (basic and acidic residues). Disordered stretches follow at residues 141-171 (WLDKTDGEKNSEASSTDNSLENSTKGADSAG), 276-298 (LQDSENVQGDKGEKESKDDAVSQ), and 395-416 (DDEDEDNVDNSEGDEESLLSRN). Polar residues predominate over residues 152 to 171 (EASSTDNSLENSTKGADSAG). Basic and acidic residues predominate over residues 283–298 (QGDKGEKESKDDAVSQ). A compositionally biased stretch (acidic residues) spans 395-411 (DDEDEDNVDNSEGDEES).

This is an uncharacterized protein from Saccharomyces cerevisiae (strain ATCC 204508 / S288c) (Baker's yeast).